A 415-amino-acid chain; its full sequence is Multidrug resistance protein MdtA (415 aa).

The first 21 residues, 1–21 (MKGSYKSRWVIVIVVVIAAIA), serve as a signal peptide directing secretion. The span at 31-47 (DSQSAAPGATKQAQQSP) shows a compositional bias: polar residues. 2 disordered regions span residues 31–60 (DSQS…GPLA) and 392–415 (EAQS…GARS). Residues 399–415 (PEEKATSREYAKKGARS) show a composition bias toward basic and acidic residues.

The protein belongs to the membrane fusion protein (MFP) (TC 8.A.1) family. Part of a tripartite efflux system composed of MdtA, MdtB and MdtC.

The protein resides in the cell inner membrane. Its function is as follows. The MdtABC tripartite complex confers resistance against novobiocin and deoxycholate. This is Multidrug resistance protein MdtA from Escherichia coli O8 (strain IAI1).